The chain runs to 1086 residues: Auxin response factor 19 (1086 aa).

The segment at residues 126 to 228 is a DNA-binding region (TF-B3); it reads FCKTLTASDT…QLMLGIRRAN (103 aa). Residues 454-485 are compositionally biased toward polar residues; that stretch reads PSKLLNFQSPNLSSANSQFNKPNTVNHISQQM. 4 disordered regions span residues 454-504, 545-564, 624-647, and 659-788; these read PSKL…QQQQ, QSPN…QSML, LSQN…QQLQ, and QQQS…SVFE. Residues 486 to 504 are compositionally biased toward low complexity; the sequence is QAQPAMVKSQQQQQQQQQQ. Residues 659 to 697 show a composition bias toward low complexity; it reads QQQSIPPVSSSLQPQLSALQQTQSHQLQQLLSSQNQQPL. Polar residues predominate over residues 700-710; the sequence is GNNSFPASTFM. Residues 711 to 724 show a composition bias toward low complexity; sequence QPPQIQVSPQQQGQ. Polar residues predominate over residues 747 to 771; the sequence is SCSTSPSANNTGHDNVSPTNFLSRN. Positions 772 to 785 are enriched in low complexity; the sequence is QQQGQAASVSASDS. The PB1 domain occupies 958-1051; the sequence is RTYTKVQKRG…EVQQMSLDGD (94 aa).

This sequence belongs to the ARF family. As to quaternary structure, homodimers and heterodimers. Interacts with the auxin-responsive protein IAA1. Binds to JMJ30. Binds to ATXR2 in the nucleus.

It is found in the nucleus. Functionally, auxin response factors (ARFs) are transcriptional factors that bind specifically to the DNA sequence 5'-TGTCTC-3' found in the auxin-responsive promoter elements (AuxREs). Could act as transcriptional activator or repressor. Formation of heterodimers with Aux/IAA proteins may alter their ability to modulate early auxin response genes expression. Involved in ethylene responses. Regulates lateral root formation through direct regulation of LBD16 and/or LBD29. Functionally redundant with ARF7. Involved in cellular dedifferentiation during callus formation on callus-inducing medium (CIM) and in an ATXR2-dependent manner. The protein is Auxin response factor 19 of Arabidopsis thaliana (Mouse-ear cress).